The primary structure comprises 234 residues: Uridylate kinase (234 aa).

Residue 9–12 (KLSG) participates in ATP binding. Gly-51 is a binding site for UMP. ATP-binding residues include Gly-52 and Arg-56. UMP contacts are provided by residues Asp-71 and 132-139 (CGNPFFTT). ATP-binding residues include Thr-159, Tyr-165, and Asp-168.

Belongs to the UMP kinase family. As to quaternary structure, homohexamer.

It localises to the cytoplasm. It catalyses the reaction UMP + ATP = UDP + ADP. It participates in pyrimidine metabolism; CTP biosynthesis via de novo pathway; UDP from UMP (UMPK route): step 1/1. With respect to regulation, inhibited by UTP. Functionally, catalyzes the reversible phosphorylation of UMP to UDP. The sequence is that of Uridylate kinase from Prochlorococcus marinus (strain MIT 9312).